Reading from the N-terminus, the 115-residue chain is Ribonuclease P protein component (115 aa).

It belongs to the RnpA family. In terms of assembly, consists of a catalytic RNA component (M1 or rnpB) and a protein subunit.

The enzyme catalyses Endonucleolytic cleavage of RNA, removing 5'-extranucleotides from tRNA precursor.. In terms of biological role, RNaseP catalyzes the removal of the 5'-leader sequence from pre-tRNA to produce the mature 5'-terminus. It can also cleave other RNA substrates such as 4.5S RNA. The protein component plays an auxiliary but essential role in vivo by binding to the 5'-leader sequence and broadening the substrate specificity of the ribozyme. The protein is Ribonuclease P protein component of Bacillus cereus (strain 03BB102).